We begin with the raw amino-acid sequence, 1234 residues long: ATP-dependent helicase/nuclease subunit A (1234 aa).

The UvrD-like helicase ATP-binding domain maps to 9-482 (STWTDDQWEA…IDLNKNFRSR (474 aa)). 30-37 (AAAGSGKT) is a binding site for ATP. The UvrD-like helicase C-terminal domain maps to 509 to 800 (QAELKLGASY…RMMTIHSSKG (292 aa)).

This sequence belongs to the helicase family. AddA subfamily. As to quaternary structure, heterodimer of AddA and AddB/RexB. Mg(2+) is required as a cofactor.

The catalysed reaction is Couples ATP hydrolysis with the unwinding of duplex DNA by translocating in the 3'-5' direction.. It catalyses the reaction ATP + H2O = ADP + phosphate + H(+). Its function is as follows. The heterodimer acts as both an ATP-dependent DNA helicase and an ATP-dependent, dual-direction single-stranded exonuclease. Recognizes the chi site generating a DNA molecule suitable for the initiation of homologous recombination. The AddA nuclease domain is required for chi fragment generation; this subunit has the helicase and 3' -&gt; 5' nuclease activities. The polypeptide is ATP-dependent helicase/nuclease subunit A (Bacillus pumilus (strain SAFR-032)).